Reading from the N-terminus, the 481-residue chain is 3-isopropylmalate dehydratase large subunit (481 aa).

3 residues coordinate [4Fe-4S] cluster: Cys-357, Cys-417, and Cys-420.

It belongs to the aconitase/IPM isomerase family. LeuC type 1 subfamily. Heterodimer of LeuC and LeuD. Requires [4Fe-4S] cluster as cofactor.

The enzyme catalyses (2R,3S)-3-isopropylmalate = (2S)-2-isopropylmalate. Its pathway is amino-acid biosynthesis; L-leucine biosynthesis; L-leucine from 3-methyl-2-oxobutanoate: step 2/4. Its function is as follows. Catalyzes the isomerization between 2-isopropylmalate and 3-isopropylmalate, via the formation of 2-isopropylmaleate. The chain is 3-isopropylmalate dehydratase large subunit from Mycolicibacterium vanbaalenii (strain DSM 7251 / JCM 13017 / BCRC 16820 / KCTC 9966 / NRRL B-24157 / PYR-1) (Mycobacterium vanbaalenii).